Reading from the N-terminus, the 293-residue chain is tRNA pseudouridine synthase B (293 aa).

The active-site Nucleophile is the Asp39.

This sequence belongs to the pseudouridine synthase TruB family. Type 1 subfamily.

It carries out the reaction uridine(55) in tRNA = pseudouridine(55) in tRNA. Responsible for synthesis of pseudouridine from uracil-55 in the psi GC loop of transfer RNAs. The protein is tRNA pseudouridine synthase B of Rickettsia bellii (strain OSU 85-389).